Reading from the N-terminus, the 227-residue chain is Thiamine-phosphate synthase (227 aa).

4-amino-2-methyl-5-(diphosphooxymethyl)pyrimidine-binding positions include 46–50 (QLRDK) and Asn87. Residues Asp88 and Asp107 each contribute to the Mg(2+) site. Ser126 lines the 4-amino-2-methyl-5-(diphosphooxymethyl)pyrimidine pocket. Position 152–154 (152–154 (TPT)) interacts with 2-[(2R,5Z)-2-carboxy-4-methylthiazol-5(2H)-ylidene]ethyl phosphate. Lys155 is a 4-amino-2-methyl-5-(diphosphooxymethyl)pyrimidine binding site. Gly183 lines the 2-[(2R,5Z)-2-carboxy-4-methylthiazol-5(2H)-ylidene]ethyl phosphate pocket.

The protein belongs to the thiamine-phosphate synthase family. It depends on Mg(2+) as a cofactor.

It catalyses the reaction 2-[(2R,5Z)-2-carboxy-4-methylthiazol-5(2H)-ylidene]ethyl phosphate + 4-amino-2-methyl-5-(diphosphooxymethyl)pyrimidine + 2 H(+) = thiamine phosphate + CO2 + diphosphate. The catalysed reaction is 2-(2-carboxy-4-methylthiazol-5-yl)ethyl phosphate + 4-amino-2-methyl-5-(diphosphooxymethyl)pyrimidine + 2 H(+) = thiamine phosphate + CO2 + diphosphate. It carries out the reaction 4-methyl-5-(2-phosphooxyethyl)-thiazole + 4-amino-2-methyl-5-(diphosphooxymethyl)pyrimidine + H(+) = thiamine phosphate + diphosphate. It functions in the pathway cofactor biosynthesis; thiamine diphosphate biosynthesis; thiamine phosphate from 4-amino-2-methyl-5-diphosphomethylpyrimidine and 4-methyl-5-(2-phosphoethyl)-thiazole: step 1/1. Condenses 4-methyl-5-(beta-hydroxyethyl)thiazole monophosphate (THZ-P) and 2-methyl-4-amino-5-hydroxymethyl pyrimidine pyrophosphate (HMP-PP) to form thiamine monophosphate (TMP). The polypeptide is Thiamine-phosphate synthase (Mycolicibacterium smegmatis (strain ATCC 700084 / mc(2)155) (Mycobacterium smegmatis)).